The following is a 162-amino-acid chain: Beta-lactoglobulin-3 (162 aa).

2 disulfide bridges follow: C66–C160 and C106–C119.

It belongs to the calycin superfamily. Lipocalin family. In terms of assembly, monomer.

It localises to the secreted. Functionally, lactoglobulin is the primary component of whey, it binds retinol and is probably involved in the transport of that molecule. In Felis catus (Cat), this protein is Beta-lactoglobulin-3 (LGB3).